Here is a 165-residue protein sequence, read N- to C-terminus: uncharacterized protein (165 aa).

The next 6 helical transmembrane spans lie at 6 to 26 (ILFP…SGQA), 28 to 48 (LFSG…AFVY), 54 to 74 (AVTP…HFFA), 78 to 98 (WVWW…SLLV), 110 to 130 (AVSM…MAWL), and 138 to 158 (ALLK…LLLI).

The protein resides in the cell membrane. This is an uncharacterized protein from Bacillus subtilis (strain 168).